Consider the following 1191-residue polypeptide: uncharacterized protein (1191 aa).

WD repeat units follow at residues 558–588, 599–629, 640–670, 682–712, 723–753, 764–794, 805–835, 995–1025, 1036–1066, 1077–1107, and 1118–1148; these read GHRD…HLWT, GHTG…KIWD, GHQD…RLWH, GHTK…RLWD, LPEV…RLWT, GHDE…IHWS, GYPE…KVWD, QRKE…TLWN, AHGD…KIWS, SDPL…RLWD, and STSG…QSWP.

This is an uncharacterized protein from Synechocystis sp. (strain ATCC 27184 / PCC 6803 / Kazusa).